Here is a 514-residue protein sequence, read N- to C-terminus: 1-pyrroline-5-carboxylate dehydrogenase (514 aa).

Catalysis depends on residues Glu286 and Cys320.

Belongs to the aldehyde dehydrogenase family. RocA subfamily.

The catalysed reaction is L-glutamate 5-semialdehyde + NAD(+) + H2O = L-glutamate + NADH + 2 H(+). Its pathway is amino-acid degradation; L-proline degradation into L-glutamate; L-glutamate from L-proline: step 2/2. The chain is 1-pyrroline-5-carboxylate dehydrogenase from Staphylococcus aureus (strain MW2).